Reading from the N-terminus, the 534-residue chain is Serine/threonine-protein kinase NLK (534 aa).

Sufficient for interaction with DAPK3 regions lie at residues 8–132 (LVSC…KAHH) and 131–423 (HHHQ…SKRI). 2 required for interaction with TAB2 regions span residues 8–311 (LVSC…VVTQ) and 441–534 (YHTC…LVWE). Disordered stretches follow at residues 29–79 (AAAA…SSAA) and 97–147 (QQPY…DIEP). The span at 33–61 (GHHHHHHHHLPHLPPPHLHHHHHPQHHLH) shows a compositional bias: basic residues. Over residues 110 to 126 (PGPAAAAPAQVQAAAAA) the composition is skewed to low complexity. Residues 129-138 (KAHHHQHSHH) are compositionally biased toward basic residues. The region spanning 145 to 434 (IEPDRPIGYG…AKDALAHPYL (290 aa)) is the Protein kinase domain. ATP-binding positions include 151–159 (IGYGAFGVV) and K174. D271 acts as the Proton acceptor in catalysis. Residue T305 is modified to Phosphothreonine; by autocatalysis. Positions 305 to 307 (TQE) match the TQE motif. A required for homodimerization and kinase activation and localization to the nucleus region spans residues 435 to 534 (DEGRLRYHTC…EMPPSPLVWE (100 aa)). S529 is modified (phosphoserine).

The protein belongs to the protein kinase superfamily. CMGC Ser/Thr protein kinase family. MAP kinase subfamily. As to quaternary structure, homodimer. Homodimerization is required for intermolecular autophosphorylation, kinase activation and nuclear localization. May interact with components of cullin-RING-based SCF (SKP1-CUL1-F-box protein) E3 ubiquitin-protein ligase complexes. Interacts with LEF1, MEF2A, MYBL1 and MYBL2. Interacts with the upstream activating kinases HIPK2 and MAP3K7/TAK1. Interaction with MAP3K7/TAK1 seems to be indirect, and may be mediated by other proteins such as STAT3, TAB1 and TAB2. Interacts with and phosphorylates a number of transcription factors including FOXO1, FOXO3, FOXO4, MYB, NOTCH1 and TCF7L2/TCF4. Interacts with DAPK3/ZIPK, and this interaction may disrupt interaction with transcription factors such as TCF7L2/TCF4. Forms a transcriptional repressor complex with CHD7, PPARG and SETDB1. Interacts with RNF138/NARF. Interacts with ATF5; the interaction stabilizes ATF5 at the protein level in a kinase-independent manner. Mg(2+) serves as cofactor. In terms of processing, phosphorylated on Thr-305. Intermolecular autophosphorylation on Thr-305 activates the enzyme.

It is found in the nucleus. It localises to the cytoplasm. The catalysed reaction is L-seryl-[protein] + ATP = O-phospho-L-seryl-[protein] + ADP + H(+). It carries out the reaction L-threonyl-[protein] + ATP = O-phospho-L-threonyl-[protein] + ADP + H(+). With respect to regulation, activated by the non-canonical Wnt signaling pathway, in which WNT5A leads to activation of MAP3K7/TAK1 and HIPK2, which subsequently phosphorylates and activates this protein. Activated by dimerization and subsequent intermolecular autophosphorylation on Thr-305. Other cytokines such as IL6 may also activate this regulatory circuit. In terms of biological role, serine/threonine-protein kinase that regulates a number of transcription factors with key roles in cell fate determination. Positive effector of the non-canonical Wnt signaling pathway, acting downstream of WNT5A, MAP3K7/TAK1 and HIPK2. Negative regulator of the canonical Wnt/beta-catenin signaling pathway. Binds to and phosphorylates TCF7L2/TCF4 and LEF1, promoting the dissociation of the TCF7L2/LEF1/beta-catenin complex from DNA, as well as the ubiquitination and subsequent proteolysis of LEF1. Together these effects inhibit the transcriptional activation of canonical Wnt/beta-catenin target genes. Negative regulator of the Notch signaling pathway. Binds to and phosphorylates NOTCH1, thereby preventing the formation of a transcriptionally active ternary complex of NOTCH1, RBPJ/RBPSUH and MAML1. Negative regulator of the MYB family of transcription factors. Phosphorylation of MYB leads to its subsequent proteolysis while phosphorylation of MYBL1 and MYBL2 inhibits their interaction with the coactivator CREBBP. Other transcription factors may also be inhibited by direct phosphorylation of CREBBP itself. Acts downstream of IL6 and MAP3K7/TAK1 to phosphorylate STAT3, which is in turn required for activation of NLK by MAP3K7/TAK1. Upon IL1B stimulus, cooperates with ATF5 to activate the transactivation activity of C/EBP subfamily members. Phosphorylates ATF5 but also stabilizes ATF5 protein levels in a kinase-independent manner. Acts as an inhibitor of the mTORC1 complex in response to osmotic stress by mediating phosphorylation of RPTOR, thereby preventing recruitment of the mTORC1 complex to lysosomes. The chain is Serine/threonine-protein kinase NLK (NLK) from Bos taurus (Bovine).